The primary structure comprises 411 residues: Inhibin beta B chain (411 aa).

The first 28 residues, 1-28 (MDGLPGRALGAACLLLLAAGWLGPEAWG), serve as a signal peptide directing secretion. Residues 27–69 (WGSPTPPPSPAAPPPPPPPGAPGGSQDTCTSCGGGGGGFRRPE) are disordered. Positions 29–296 (SPTPPPSPAA…GDSRHRIRKR (268 aa)) are excised as a propeptide. Residues 30–47 (PTPPPSPAAPPPPPPPGA) show a composition bias toward pro residues. Asn-97 carries an N-linked (GlcNAc...) asparagine glycan. 4 disulfides stabilise this stretch: Cys-300/Cys-308, Cys-307/Cys-376, Cys-336/Cys-408, and Cys-340/Cys-410.

It belongs to the TGF-beta family. In terms of assembly, dimeric, linked by one or more disulfide bonds. Inhibin B is a dimer of alpha and beta-B. Activin B is a homodimer of beta-B. Activin AB is a dimer of beta-A and beta-B. Interacts with FST and FSTL3. In terms of tissue distribution, alpha- and beta-B subunits are the predominant forms found in rat testis. Also expressed in ovary.

The protein resides in the secreted. Its function is as follows. Inhibins and activins inhibit and activate, respectively, the secretion of follitropin by the pituitary gland. Inhibins/activins are involved in regulating a number of diverse functions such as hypothalamic and pituitary hormone secretion, gonadal hormone secretion, germ cell development and maturation, erythroid differentiation, insulin secretion, nerve cell survival, embryonic axial development or bone growth, depending on their subunit composition. Inhibins appear to oppose the functions of activins. Activin B is a dimer of alpha and beta-B that plays a role in several essential biological processes including embryonic development, stem cell maintenance and differentiation, haematopoiesis, cell proliferation and wound healing. Signals through type I receptor ACVR1C, abundantly expressed in pancreatic beta cells, and type II receptors like ACVR2A. Upon ligand binding, these receptors phosphorylate intracellular signaling mediators SMAD2 and SMAD3, which form a complex with SMAD4, translocate to the nucleus, and regulate gene expression. Plays a crucial role in the induction of hepcidin by inflammation through activation of ACVR1C and subsequent phosphorylation of SMAD1/5/8. Regulates adipocyte lipid metabolism by decreasing non-esterified fatty acids and glycerol release and increases intracellular triglyceride content. Stimulates wound healing by promoting cell migration and hair follicle regeneration through the JNK and ERK signaling pathways downstream of RHOA. Functionally, inhibin B is a dimer of alpha and beta-B that plays a crucial role in the regulation of the reproductive system by inhibiting the secretion of follicle-stimulating hormone (FSH) from the anterior pituitary gland. Thereby, maintains reproductive homeostasis in both males and females. Acts as a more potent suppressor of FSH release than inhibin A. Functions as competitive receptor antagonist binding activin type II receptors with high affinity in the presence of the TGF-beta type III coreceptor/TGFBR3L. The polypeptide is Inhibin beta B chain (Inhbb) (Rattus norvegicus (Rat)).